Here is a 266-residue protein sequence, read N- to C-terminus: Ribosomal RNA small subunit methyltransferase A (266 aa).

Asn-12, Leu-14, Gly-39, Glu-61, Asp-87, and Asn-107 together coordinate S-adenosyl-L-methionine.

The protein belongs to the class I-like SAM-binding methyltransferase superfamily. rRNA adenine N(6)-methyltransferase family. RsmA subfamily.

It localises to the cytoplasm. It carries out the reaction adenosine(1518)/adenosine(1519) in 16S rRNA + 4 S-adenosyl-L-methionine = N(6)-dimethyladenosine(1518)/N(6)-dimethyladenosine(1519) in 16S rRNA + 4 S-adenosyl-L-homocysteine + 4 H(+). Functionally, specifically dimethylates two adjacent adenosines (A1518 and A1519) in the loop of a conserved hairpin near the 3'-end of 16S rRNA in the 30S particle. May play a critical role in biogenesis of 30S subunits. The protein is Ribosomal RNA small subunit methyltransferase A of Nitratidesulfovibrio vulgaris (strain DP4) (Desulfovibrio vulgaris).